Reading from the N-terminus, the 327-residue chain is DNA-directed RNA polymerase subunit alpha (327 aa).

The segment at 1–233 (MVREKVKVST…NLFIPFLHVE (233 aa)) is alpha N-terminal domain (alpha-NTD). Residues 267-327 (LAFQYIFIDQ…KKILDILEKK (61 aa)) form an alpha C-terminal domain (alpha-CTD) region.

It belongs to the RNA polymerase alpha chain family. As to quaternary structure, in plastids the minimal PEP RNA polymerase catalytic core is composed of four subunits: alpha, beta, beta', and beta''. When a (nuclear-encoded) sigma factor is associated with the core the holoenzyme is formed, which can initiate transcription.

The protein resides in the plastid. Its subcellular location is the chloroplast. The catalysed reaction is RNA(n) + a ribonucleoside 5'-triphosphate = RNA(n+1) + diphosphate. Its function is as follows. DNA-dependent RNA polymerase catalyzes the transcription of DNA into RNA using the four ribonucleoside triphosphates as substrates. The polypeptide is DNA-directed RNA polymerase subunit alpha (Crucihimalaya wallichii (Rock-cress)).